Consider the following 526-residue polypeptide: Tyrosine-protein kinase transforming protein Src (526 aa).

The segment covering 1–15 has biased composition (basic residues); it reads MGSSKSKPKGPSQRR. Positions 1–59 are disordered; it reads MGSSKSKPKGPSQRRRSLEPPDSTHHGGFPASQTPNKTAAPDTHRTPSRSFGTVATEPK. Residue Gly2 is the site of N-myristoyl glycine; by host attachment. Residues 16 to 25 show a composition bias toward basic and acidic residues; that stretch reads RSLEPPDSTH. The 62-residue stretch at 81–142 folds into the SH3 domain; sequence GGVTTFVALY…PSNYVAPSDS (62 aa). One can recognise an SH2 domain in the interval 148–245; sequence WYFGKITRRE…GLCHRLTNVC (98 aa). In terms of domain architecture, Protein kinase spans 267–517; sequence LRLEVKLGQG…TFEYLQAQLL (251 aa). Residues 273–281 and Lys295 contribute to the ATP site; that span reads LGQGCFGEV. The active-site Proton acceptor is the Asp386. Tyr416 is subject to Phosphotyrosine; by autocatalysis.

The protein belongs to the protein kinase superfamily. Tyr protein kinase family. SRC subfamily. As to quaternary structure, homodimer. Post-translationally, the phosphorylated form is termed pp60v-src.

The enzyme catalyses L-tyrosyl-[protein] + ATP = O-phospho-L-tyrosyl-[protein] + ADP + H(+). In terms of biological role, this phosphoprotein, required for both the initiation and the maintenance of neoplastic transformation, is a protein kinase that catalyzes the phosphorylation of tyrosine residues in vitro. This is Tyrosine-protein kinase transforming protein Src (V-SRC) from Rous sarcoma virus subgroup E (strain Schmidt-Ruppin) (RSV-SR-E).